The primary structure comprises 180 residues: Large ribosomal subunit protein uL5 (180 aa).

It belongs to the universal ribosomal protein uL5 family. Part of the 50S ribosomal subunit; part of the 5S rRNA/L5/L18/L25 subcomplex. Contacts the 5S rRNA and the P site tRNA. Forms a bridge to the 30S subunit in the 70S ribosome.

This is one of the proteins that bind and probably mediate the attachment of the 5S RNA into the large ribosomal subunit, where it forms part of the central protuberance. In the 70S ribosome it contacts protein S13 of the 30S subunit (bridge B1b), connecting the 2 subunits; this bridge is implicated in subunit movement. Contacts the P site tRNA; the 5S rRNA and some of its associated proteins might help stabilize positioning of ribosome-bound tRNAs. The sequence is that of Large ribosomal subunit protein uL5 from Lactococcus lactis subsp. lactis (strain IL1403) (Streptococcus lactis).